The sequence spans 172 residues: MARTMSKTAPKTSAANGSLAPWLGVALIVILFDQLTKIAVQKVFAYGVAHEVTSFFNLILVYNRGAAFSFLAMAGGWQRWAFTALGVVAALVICYLLKRHGGQKMFCTALALILGGALGNVIDRLAYGHVIDFLDFHLRTWHWPAFNLADSAITVGAVLLVLDELRRVRGSR.

4 consecutive transmembrane segments (helical) span residues 12-32 (TSAANGSLAPWLGVALIVILF), 43-63 (VFAYGVAHEVTSFFNLILVYN), 77-97 (WQRWAFTALGVVAALVICYLL), and 102-122 (GQKMFCTALALILGGALGNVI). Active-site residues include Asp132 and Asp150. A helical membrane pass occupies residues 142-162 (HWPAFNLADSAITVGAVLLVL).

It belongs to the peptidase A8 family.

It is found in the cell inner membrane. The enzyme catalyses Release of signal peptides from bacterial membrane prolipoproteins. Hydrolyzes -Xaa-Yaa-Zaa-|-(S,diacylglyceryl)Cys-, in which Xaa is hydrophobic (preferably Leu), and Yaa (Ala or Ser) and Zaa (Gly or Ala) have small, neutral side chains.. It functions in the pathway protein modification; lipoprotein biosynthesis (signal peptide cleavage). This protein specifically catalyzes the removal of signal peptides from prolipoproteins. This is Lipoprotein signal peptidase from Paraburkholderia phytofirmans (strain DSM 17436 / LMG 22146 / PsJN) (Burkholderia phytofirmans).